The sequence spans 205 residues: Urease accessory protein UreE (205 aa).

Residues 178–196 are compositionally biased toward basic residues; sequence AHFHAGGHGHVHSGHGHGG. The segment at 178–205 is disordered; the sequence is AHFHAGGHGHVHSGHGHGGKHGEHDAES.

Belongs to the UreE family.

The protein localises to the cytoplasm. In terms of biological role, involved in urease metallocenter assembly. Binds nickel. Probably functions as a nickel donor during metallocenter assembly. In Bordetella pertussis (strain Tohama I / ATCC BAA-589 / NCTC 13251), this protein is Urease accessory protein UreE.